The following is a 259-amino-acid chain: 14-3-3-like protein (259 aa).

It belongs to the 14-3-3 family.

The chain is 14-3-3-like protein from Helianthus annuus (Common sunflower).